We begin with the raw amino-acid sequence, 599 residues long: Elongation factor 4 (599 aa).

A tr-type G domain is found at S5 to T187. Residues D17–T22 and N134–D137 contribute to the GTP site.

Belongs to the TRAFAC class translation factor GTPase superfamily. Classic translation factor GTPase family. LepA subfamily.

It localises to the cell inner membrane. It catalyses the reaction GTP + H2O = GDP + phosphate + H(+). Functionally, required for accurate and efficient protein synthesis under certain stress conditions. May act as a fidelity factor of the translation reaction, by catalyzing a one-codon backward translocation of tRNAs on improperly translocated ribosomes. Back-translocation proceeds from a post-translocation (POST) complex to a pre-translocation (PRE) complex, thus giving elongation factor G a second chance to translocate the tRNAs correctly. Binds to ribosomes in a GTP-dependent manner. This is Elongation factor 4 from Stutzerimonas stutzeri (strain A1501) (Pseudomonas stutzeri).